The following is a 228-amino-acid chain: Ankyrin repeat domain-containing protein 46 (228 aa).

4 ANK repeats span residues Q11 to I40, R44 to A73, Q77 to I103, and Q107 to G138. Residues V195–G215 form a helical membrane-spanning segment.

It is found in the membrane. The chain is Ankyrin repeat domain-containing protein 46 (ANKRD46) from Bos taurus (Bovine).